Here is a 407-residue protein sequence, read N- to C-terminus: Shaggy-related protein kinase GSK1 (407 aa).

Positions 1–19 are enriched in pro residues; it reads MEAPPGPEPMELDAPPPPA. A disordered region spans residues 1–21; sequence MEAPPGPEPMELDAPPPPAAV. Residues 68–352 form the Protein kinase domain; that stretch reads YMAERVVGTG…ALDACAHSFF (285 aa). ATP contacts are provided by residues 74–82 and Lys97; that span reads VGTGSFGIV. Residue Asp193 is the Proton acceptor of the active site.

This sequence belongs to the protein kinase superfamily. CMGC Ser/Thr protein kinase family. GSK-3 subfamily. As to quaternary structure, interacts with LIC. In terms of tissue distribution, highly expressed in the entire young panicles, spikelets, awns, vascular bundles of palea and lemma, stigma and rachilla. Expressed in root tips, root hairs, lamina joint in the collar region, vascular bundles of coleoptiles.

The enzyme catalyses L-seryl-[protein] + ATP = O-phospho-L-seryl-[protein] + ADP + H(+). The catalysed reaction is L-threonyl-[protein] + ATP = O-phospho-L-threonyl-[protein] + ADP + H(+). Its function is as follows. Probable serine-threonine kinase that may act as a negative regulator of brassinosteroid (BR) signaling during flower development. May have physiological roles in stress signal-transduction pathways. Phosphorylates LIC in response to BR perception. The polypeptide is Shaggy-related protein kinase GSK1 (Oryza sativa subsp. japonica (Rice)).